The chain runs to 449 residues: MQRVAVMVLAVLLALFSAPPAWAIDPPVIDAGAVPPDETGPDQPTEQRKICATPTVMPNSNFADRPWANDYLRIQEAQKFATGAGVTVAVIDTGVNGSPRVPAEPGGDFVDAAGNGMSDCDAHGTMTAAIIGGRPSPTDGFVGMAPDVRLLSLRQTSVAFQPKGARQDPNDPNTTQTAGSIRSLARSVVHAANLGAQVINISEAACYKVTRRIDETSLGAAINYAVNVKGAVIVVAAGNTGQDCSQNPPPDPSVPSDPRGWREVQTIVSPAWYDPLVLTVGSIGQNGQPSNFSMSGPWVGAAAPGENLTSLGYDGQPVNATPGEDGPVPLNGTSFSAAYVSGLAALVKQRFPDLTPAQIINRITATARHPGGGVDNYVGAGVIDPVAALTWEIPDGPEKAPFRVKEVPPPVYIPPPDRGPITAVVIAGATLAFALGIGALARRALRRKQ.

The first 23 residues, 1-23, serve as a signal peptide directing secretion; that stretch reads MQRVAVMVLAVLLALFSAPPAWA. A disulfide bond links Cys51 and Cys120. The Peptidase S8 domain maps to 66-389; that stretch reads PWANDYLRIQ…AGVIDPVAAL (324 aa). Catalysis depends on charge relay system residues Asp92 and His123. Disordered stretches follow at residues 160 to 179 and 240 to 259; these read FQPK…QTAG and TGQD…SDPR. Polar residues predominate over residues 170 to 179; it reads NDPNTTQTAG. A disulfide bond links Cys206 and Cys244. The Charge relay system role is filled by Ser334. A helical transmembrane segment spans residues 421–441; sequence ITAVVIAGATLAFALGIGALA.

The protein belongs to the peptidase S8 family.

Its subcellular location is the cell membrane. May play a dual role in regulation of ESX-1 secretion and virulence. Acts as a protease that cleaves EspB. The chain is Mycosin-1 from Mycolicibacterium smegmatis (strain ATCC 700084 / mc(2)155) (Mycobacterium smegmatis).